Consider the following 118-residue polypeptide: Large ribosomal subunit protein uL24 (118 aa).

The protein belongs to the universal ribosomal protein uL24 family. Part of the 50S ribosomal subunit.

Its function is as follows. One of two assembly initiator proteins, it binds directly to the 5'-end of the 23S rRNA, where it nucleates assembly of the 50S subunit. Functionally, one of the proteins that surrounds the polypeptide exit tunnel on the outside of the subunit. The chain is Large ribosomal subunit protein uL24 from Prochlorococcus marinus (strain MIT 9313).